Consider the following 297-residue polypeptide: Homoserine kinase (297 aa).

An ATP-binding site is contributed by Pro82–Ala92.

This sequence belongs to the GHMP kinase family. Homoserine kinase subfamily.

It localises to the cytoplasm. The enzyme catalyses L-homoserine + ATP = O-phospho-L-homoserine + ADP + H(+). It participates in amino-acid biosynthesis; L-threonine biosynthesis; L-threonine from L-aspartate: step 4/5. Functionally, catalyzes the ATP-dependent phosphorylation of L-homoserine to L-homoserine phosphate. The sequence is that of Homoserine kinase from Clostridium botulinum (strain Okra / Type B1).